A 75-amino-acid polypeptide reads, in one-letter code: Putative defensin-like protein 126 (75 aa).

An N-terminal signal peptide occupies residues 1 to 24 (MSKSTFLFVYIILILGSMVNEIQG). 4 cysteine pairs are disulfide-bonded: cysteine 29–cysteine 73, cysteine 38–cysteine 57, cysteine 43–cysteine 67, and cysteine 47–cysteine 69.

The protein belongs to the DEFL family.

The protein resides in the secreted. This is Putative defensin-like protein 126 (LCR6) from Arabidopsis thaliana (Mouse-ear cress).